The sequence spans 465 residues: MKHKVKNIHFVGIGGSGMSGIAEVLLNLGYTVSGSDLGSNAATRRLIELGAKVTLGHAAENIEKADAIVTSTAVKEDNPEVIAAREKHIPIVPRAVMLAELMRLRRGIAIAGTHGKTTTTSLVASVLAEGGLDPTFVIGGLLNSAGANAKLGTGEFIVAEADESDASFLNLSPVIEVITNIDADHMETYGHDFEKLKQAFIEFTQRLPFYGVAVLCIDDATVREIMPRISKLITTYGFHEDAQVRAIDAKAIDGHMHFTVLQEGYAPMQVSLNQPGMHNVQNACAAIAIARELGVADHATQKALTEFNGVGRRFTRYGEISLPAVNDKPAGTFALVDDYGHHPVETAATIAAARGAYPGRRLVLAFQPHRYTRTRDLFEDFVKVLSTTDMLVLAEVYAAGEQPIVAADGRTLAHALRVAGKVDPVFVEKIADMPATIMNIIKDGDVVITMGAGSISGVPAKLVQA.

Position 112 to 118 (112 to 118 (GTHGKTT)) interacts with ATP.

It belongs to the MurCDEF family.

The protein resides in the cytoplasm. It carries out the reaction UDP-N-acetyl-alpha-D-muramate + L-alanine + ATP = UDP-N-acetyl-alpha-D-muramoyl-L-alanine + ADP + phosphate + H(+). It functions in the pathway cell wall biogenesis; peptidoglycan biosynthesis. In terms of biological role, cell wall formation. The polypeptide is UDP-N-acetylmuramate--L-alanine ligase (Janthinobacterium sp. (strain Marseille) (Minibacterium massiliensis)).